We begin with the raw amino-acid sequence, 137 residues long: Nucleoside diphosphate kinase (137 aa).

ATP-binding residues include K9, F57, R85, T91, R102, and N112. Residue H115 is the Pros-phosphohistidine intermediate of the active site.

This sequence belongs to the NDK family. Homotetramer. It depends on Mg(2+) as a cofactor.

It localises to the cytoplasm. It catalyses the reaction a 2'-deoxyribonucleoside 5'-diphosphate + ATP = a 2'-deoxyribonucleoside 5'-triphosphate + ADP. The enzyme catalyses a ribonucleoside 5'-diphosphate + ATP = a ribonucleoside 5'-triphosphate + ADP. Functionally, major role in the synthesis of nucleoside triphosphates other than ATP. The ATP gamma phosphate is transferred to the NDP beta phosphate via a ping-pong mechanism, using a phosphorylated active-site intermediate. The chain is Nucleoside diphosphate kinase from Campylobacter concisus (strain 13826).